A 668-amino-acid chain; its full sequence is UvrABC system protein C (668 aa).

Residues 14 to 91 form the GIY-YIG domain; it reads DSPGCYLHKD…IQRYKPKYNI (78 aa). One can recognise a UVR domain in the interval 196-231; that stretch reads KKIVNELEAKMMVSSDNMEFEQAAEYRDVIKAIGTL.

Belongs to the UvrC family. Interacts with UvrB in an incision complex.

It localises to the cytoplasm. The UvrABC repair system catalyzes the recognition and processing of DNA lesions. UvrC both incises the 5' and 3' sides of the lesion. The N-terminal half is responsible for the 3' incision and the C-terminal half is responsible for the 5' incision. This Lactococcus lactis subsp. lactis (strain IL1403) (Streptococcus lactis) protein is UvrABC system protein C.